Consider the following 690-residue polypeptide: Protein arginine N-methyltransferase 7 (690 aa).

SAM-dependent MTase PRMT-type domains follow at residues 14–357 (QNSW…YSLW) and 366–690 (TKSV…QKKL).

This sequence belongs to the class I-like SAM-binding methyltransferase superfamily. Protein arginine N-methyltransferase family. PRMT7 subfamily.

Essential arginine methyltransferase that can both catalyze the formation of omega-N monomethylarginine (MMA) and symmetrical dimethylarginine (sDMA). Specifically mediates the symmetrical dimethylation of arginine residues in the small nuclear ribonucleoproteins SmD1 and SmD3. The protein is Protein arginine N-methyltransferase 7 (Art7) of Drosophila yakuba (Fruit fly).